Consider the following 340-residue polypeptide: ATP-dependent 6-phosphofructokinase (340 aa).

Glycine 11 lines the ATP pocket. 21 to 25 (RAVVR) is a binding site for ADP. ATP is bound by residues 72–73 (RY) and 102–105 (GDGS). Aspartate 103 contacts Mg(2+). 125-127 (TID) is a substrate binding site. Aspartate 127 (proton acceptor) is an active-site residue. Arginine 154 lines the ADP pocket. Substrate-binding positions include arginine 162 and 169–171 (MGR). Residues 185–187 (GAD), lysine 211, and 213–215 (KNH) contribute to the ADP site. Substrate-binding positions include glutamate 222, arginine 244, and 250 to 253 (HIQR).

The protein belongs to the phosphofructokinase type A (PFKA) family. ATP-dependent PFK group I subfamily. Prokaryotic clade 'B1' sub-subfamily. In terms of assembly, homotetramer. Mg(2+) is required as a cofactor.

The protein localises to the cytoplasm. The catalysed reaction is beta-D-fructose 6-phosphate + ATP = beta-D-fructose 1,6-bisphosphate + ADP + H(+). It participates in carbohydrate degradation; glycolysis; D-glyceraldehyde 3-phosphate and glycerone phosphate from D-glucose: step 3/4. Allosterically activated by ADP and other diphosphonucleosides, and allosterically inhibited by phosphoenolpyruvate. Functionally, catalyzes the phosphorylation of D-fructose 6-phosphate to fructose 1,6-bisphosphate by ATP, the first committing step of glycolysis. This Lactococcus lactis subsp. lactis (Streptococcus lactis) protein is ATP-dependent 6-phosphofructokinase.